The following is a 158-amino-acid chain: MKTPPVLKRRREGVTDYRKRYRLVISRETRAVIRQTRKGLIIQLVDYVPEGDHVLVTVTNKTLKKALNIDGNNIQMYYLAGYMAAKKGISLGISGAVVDTGRAIFRKGGRIAAAIKGLIDGGLEINADEDIFPDESRLNGEHLKQRLDINEIKSKIGE.

The protein belongs to the universal ribosomal protein uL18 family. Part of the 50S ribosomal subunit. Contacts the 5S and 23S rRNAs.

In terms of biological role, this is one of the proteins that bind and probably mediate the attachment of the 5S RNA into the large ribosomal subunit, where it forms part of the central protuberance. The polypeptide is Large ribosomal subunit protein uL18 (Picrophilus torridus (strain ATCC 700027 / DSM 9790 / JCM 10055 / NBRC 100828 / KAW 2/3)).